Consider the following 429-residue polypeptide: 3-phosphoshikimate 1-carboxyvinyltransferase (429 aa).

The 3-phosphoshikimate site is built by Lys23, Ser24, and Arg28. Lys23 is a binding site for phosphoenolpyruvate. Phosphoenolpyruvate is bound by residues Gly95 and Arg123. Ser168, Gln170, Asp316, and Lys343 together coordinate 3-phosphoshikimate. Gln170 is a phosphoenolpyruvate binding site. Asp316 (proton acceptor) is an active-site residue. Residues Arg347 and Arg389 each contribute to the phosphoenolpyruvate site.

The protein belongs to the EPSP synthase family. Monomer.

It localises to the cytoplasm. It carries out the reaction 3-phosphoshikimate + phosphoenolpyruvate = 5-O-(1-carboxyvinyl)-3-phosphoshikimate + phosphate. Its pathway is metabolic intermediate biosynthesis; chorismate biosynthesis; chorismate from D-erythrose 4-phosphate and phosphoenolpyruvate: step 6/7. In terms of biological role, catalyzes the transfer of the enolpyruvyl moiety of phosphoenolpyruvate (PEP) to the 5-hydroxyl of shikimate-3-phosphate (S3P) to produce enolpyruvyl shikimate-3-phosphate and inorganic phosphate. In Bacillus cereus (strain 03BB102), this protein is 3-phosphoshikimate 1-carboxyvinyltransferase.